The chain runs to 754 residues: Protein neuralized (754 aa).

The NHR 1 domain maps to 106–260 (PLQFHSVHGD…NCTGIEFLDS (155 aa)). The segment covering 280–297 (QQQQMPQPAANASSALNS) has biased composition (low complexity). Positions 280–308 (QQQQMPQPAANASSALNSHHPHQQSRRSL) are disordered. Phosphoserine is present on residues Ser338 and Ser341. The region spanning 368–523 (PVPFHNTKGR…STQSLRMFRQ (156 aa)) is the NHR 2 domain. The segment at 701–742 (CTICYENPIDSVLYMCGHMCMCYDCAIEQWRGVGGGQCPLCR) adopts an RING-type zinc-finger fold.

It localises to the nucleus. Its function is as follows. Involved in neurogenesis. Interacts with other neurogenic proteins in the specification of the neuroblast versus epidermoblast cell fate. This Drosophila melanogaster (Fruit fly) protein is Protein neuralized (neur).